Consider the following 875-residue polypeptide: Aminopeptidase M1-B (875 aa).

The interval 96–203 (IGEGVLKMDF…MSTYLVAIVV (108 aa)) is required for membrane association. Substrate is bound by residues E136 and 269-273 (GAMEN). H305 serves as a coordination point for Zn(2+). E306 serves as the catalytic Proton acceptor. Residues H309 and E328 each contribute to the Zn(2+) site. The short motif at 722-723 (LL) is the Dileucine internalization motif element.

The protein belongs to the peptidase M1 family. Homodimer. Zn(2+) is required as a cofactor.

The protein localises to the membrane. The protein resides in the microsome membrane. It localises to the cytoplasm. It catalyses the reaction Release of an N-terminal amino acid, Xaa-|-Yaa- from a peptide, amide or arylamide. Xaa is preferably Ala, but may be most amino acids including Pro (slow action). When a terminal hydrophobic residue is followed by a prolyl residue, the two may be released as an intact Xaa-Pro dipeptide.. The sequence is that of Aminopeptidase M1-B from Oryza sativa subsp. japonica (Rice).